Reading from the N-terminus, the 634-residue chain is (-)-limonene synthase, chloroplastic (634 aa).

The N-terminal 21 residues, 1 to 21, are a transit peptide targeting the chloroplast; it reads MSPVSAIPLAYKLCLPRSLIS. Residues arginine 348, aspartate 385, aspartate 389, arginine 526, and glycine 529 each coordinate (2E)-geranyl diphosphate. Aspartate 385 and aspartate 389 together coordinate Mg(2+). The DDXXD motif motif lies at 385 to 389; that stretch reads DDIYD. The Mg(2+) site is built by glycine 529 and aspartate 537.

It belongs to the terpene synthase family. Tpsb subfamily. As to quaternary structure, monomer. Mg(2+) is required as a cofactor. Requires Mn(2+) as cofactor.

The protein resides in the plastid. Its subcellular location is the chloroplast. It carries out the reaction (2E)-geranyl diphosphate = (4S)-limonene + diphosphate. It functions in the pathway secondary metabolite biosynthesis; terpenoid biosynthesis. Its pathway is terpene metabolism; oleoresin biosynthesis. Functionally, monoterpene synthase (mono-TPS) involved in the biosynthesis of monoterpene natural products. Catalyzes the conversion of (2E)-geranyl diphosphate (GPP) into (-)-limonene. Not able to use geranylgeranyl pyrophosphate (GGPP) and farnesyl pyrophosphate (FPP) as substrates. This chain is (-)-limonene synthase, chloroplastic, found in Picea sitchensis (Sitka spruce).